Consider the following 452-residue polypeptide: Methionine aminopeptidase 2 (452 aa).

A disordered region spans residues 1-96; it reads MAVQALPEIN…VPLSTLFPNN (96 aa). The segment covering 18–35 has biased composition (low complexity); it reads GAANAAAKGQAAQGTAGN. The segment covering 36–53 has biased composition (acidic residues); sequence DDAENDESDEDKEDEQEV. The span at 62-77 shows a compositional bias: basic residues; that stretch reads GKKKKKKTKKKKKKGT. A substrate-binding site is contributed by H202. A divalent metal cation is bound by residues D222, D233, and H302. Residue H310 coordinates substrate. E338 and E433 together coordinate a divalent metal cation.

Belongs to the peptidase M24A family. Methionine aminopeptidase eukaryotic type 2 subfamily. Co(2+) serves as cofactor. Zn(2+) is required as a cofactor. Requires Mn(2+) as cofactor. The cofactor is Fe(2+).

The protein localises to the cytoplasm. It catalyses the reaction Release of N-terminal amino acids, preferentially methionine, from peptides and arylamides.. Functionally, cotranslationally removes the N-terminal methionine from nascent proteins. The N-terminal methionine is often cleaved when the second residue in the primary sequence is small and uncharged (Met-Ala-, Cys, Gly, Pro, Ser, Thr, or Val). The protein is Methionine aminopeptidase 2 of Coccidioides posadasii (strain C735) (Valley fever fungus).